Here is a 290-residue protein sequence, read N- to C-terminus: Zinc finger protein-like 1 homolog (290 aa).

A B box-type; degenerate zinc finger spans residues 1-43 (MGLCKCPKRQVTTQFCFEHRVNVCENCMVVNHTKCTVQSYIQW). Residues 53-101 (CPLCGSPLDNEDCVRLICYHVFHWKCLNAKQQSLPANTAPGGHTCPTCS) form an RING-type; atypical zinc finger. Positions 156 to 168 (NGNTFASSMSQTR) are enriched in polar residues. Positions 156–175 (NGNTFASSMSQTRSNERPES) are disordered. A helical transmembrane segment spans residues 249–269 (WFLVLGGCIGFVCIIYVLATL).

It belongs to the ZFPL1 family.

Its subcellular location is the membrane. In Aedes aegypti (Yellowfever mosquito), this protein is Zinc finger protein-like 1 homolog.